A 112-amino-acid chain; its full sequence is Integration host factor subunit alpha (112 aa).

It belongs to the bacterial histone-like protein family. As to quaternary structure, heterodimer of an alpha and a beta chain.

In terms of biological role, this protein is one of the two subunits of integration host factor, a specific DNA-binding protein that functions in genetic recombination as well as in transcriptional and translational control. The sequence is that of Integration host factor subunit alpha from Rhizobium johnstonii (strain DSM 114642 / LMG 32736 / 3841) (Rhizobium leguminosarum bv. viciae).